A 92-amino-acid chain; its full sequence is Small ribosomal subunit protein uS19c (92 aa).

The protein belongs to the universal ribosomal protein uS19 family.

Its subcellular location is the plastid. It is found in the chloroplast. Protein S19 forms a complex with S13 that binds strongly to the 16S ribosomal RNA. This Chloranthus spicatus (Chulantree) protein is Small ribosomal subunit protein uS19c.